Here is a 198-residue protein sequence, read N- to C-terminus: MEHYLSLFVKSVFIENMALSFFLGMCTFLAVSKKVSTAFGLGIAVIVVLGIAVPANQLVYTHVLKDGALVEGVDLSFLNFITFIGVIAALVQILEMILDKFFPALYSALGIFLPLITVNCAIFGGVSFMVQREYNFTESVVYGLGAGTGWMLAIVALAGLTEKMKYSDVPAGLRGLGITFITVGLMALGFMSFSGIQL.

6 helical membrane-spanning segments follow: residues 11 to 31, 35 to 55, 77 to 97, 110 to 130, 140 to 160, and 176 to 196; these read SVFIENMALSFFLGMCTFLAV, VSTAFGLGIAVIVVLGIAVPA, FLNFITFIGVIAALVQILEMI, GIFLPLITVNCAIFGGVSFMV, VVYGLGAGTGWMLAIVALAGL, and LGITFITVGLMALGFMSFSGI.

This sequence belongs to the NqrDE/RnfAE family. Composed of six subunits; NqrA, NqrB, NqrC, NqrD, NqrE and NqrF.

The protein localises to the cell inner membrane. It catalyses the reaction a ubiquinone + n Na(+)(in) + NADH + H(+) = a ubiquinol + n Na(+)(out) + NAD(+). Its function is as follows. NQR complex catalyzes the reduction of ubiquinone-1 to ubiquinol by two successive reactions, coupled with the transport of Na(+) ions from the cytoplasm to the periplasm. NqrA to NqrE are probably involved in the second step, the conversion of ubisemiquinone to ubiquinol. The sequence is that of Na(+)-translocating NADH-quinone reductase subunit E from Actinobacillus pleuropneumoniae serotype 5b (strain L20).